The chain runs to 319 residues: Transcription initiation factor IIB 6 (319 aa).

The segment covering 1-16 (MTDARMRSREQERTDE) has biased composition (basic and acidic residues). A disordered region spans residues 1–33 (MTDARMRSREQERTDETESESTDGCPECGGLVV). The segment at 21–51 (STDGCPECGGLVVNDEEHGESVCADCGLVVE) adopts a TFIIB-type zinc-finger fold. Positions 25, 28, 43, and 46 each coordinate Zn(2+). The segment covering 59-74 (PEWRAFDSKEKDEKSR) has biased composition (basic and acidic residues). The segment at 59–89 (PEWRAFDSKEKDEKSRVGAPTTNTMHDKGLS) is disordered. Repeat copies occupy residues 137–220 (GEID…VREL) and 231–312 (SYVP…ELLE).

The protein belongs to the TFIIB family.

Its function is as follows. Stabilizes TBP binding to an archaeal box-A promoter. Also responsible for recruiting RNA polymerase II to the pre-initiation complex (DNA-TBP-TFIIB). This is Transcription initiation factor IIB 6 from Halobacterium salinarum (strain ATCC 700922 / JCM 11081 / NRC-1) (Halobacterium halobium).